Consider the following 124-residue polypeptide: MAPVTSKKSKSVKKFVVDVAAPVENDVFDQESYVKYLVEHVKVDGIVGNLGNDISITAESDNKVVVVVSGNGSFSGKYLKYLTKKYLKKNQIRDWIRFVSVKQNQYKLQFYAVAEDDEEEEDEE.

The protein belongs to the eukaryotic ribosomal protein eL22 family. Component of the large ribosomal subunit. Mature ribosomes consist of a small (40S) and a large (60S) subunit. The 40S subunit contains about 32 different proteins and 1 molecule of RNA (18S). The 60S subunit contains 45 different proteins and 3 molecules of RNA (25S, 5.8S and 5S).

Its subcellular location is the cytoplasm. Its function is as follows. Component of the ribosome, a large ribonucleoprotein complex responsible for the synthesis of proteins in the cell. The small ribosomal subunit (SSU) binds messenger RNAs (mRNAs) and translates the encoded message by selecting cognate aminoacyl-transfer RNA (tRNA) molecules. The large subunit (LSU) contains the ribosomal catalytic site termed the peptidyl transferase center (PTC), which catalyzes the formation of peptide bonds, thereby polymerizing the amino acids delivered by tRNAs into a polypeptide chain. The nascent polypeptides leave the ribosome through a tunnel in the LSU and interact with protein factors that function in enzymatic processing, targeting, and the membrane insertion of nascent chains at the exit of the ribosomal tunnel. This chain is Large ribosomal subunit protein eL22, found in Candida albicans (strain SC5314 / ATCC MYA-2876) (Yeast).